Here is a 447-residue protein sequence, read N- to C-terminus: Thiol-specific monooxygenase (447 aa).

Residues glycine 13–serine 17, glutamate 38, valine 46–tryptophan 47, asparagine 91–threonine 92, and aspartate 137–valine 138 each bind FAD. NADP(+) is bound at residue threonine 90 to asparagine 91. An NADP(+)-binding site is contributed by serine 223–aspartate 226.

Belongs to the FMO family. In terms of assembly, monomer. FAD serves as cofactor.

Its function is as follows. Flavin-dependent oxidation of thiol-containing compounds. Probably required for the correct folding of disulfide-bonded proteins. The polypeptide is Thiol-specific monooxygenase (fmo1) (Schizosaccharomyces pombe (strain 972 / ATCC 24843) (Fission yeast)).